A 213-amino-acid polypeptide reads, in one-letter code: Outer envelope pore protein 24B, chloroplastic (213 aa).

The Cytoplasmic portion of the chain corresponds to 1-3 (MAM). The chain crosses the membrane as a beta stranded span at residues 4 to 13 (KASIKGKYDT). At 14 to 18 (DKTSG) the chain is on the chloroplast intermembrane side. The beta stranded transmembrane segment at 19-28 (IGSLAFNAGD) threads the bilayer. The Cytoplasmic portion of the chain corresponds to 29–32 (IKLR). The chain crosses the membrane as a beta stranded span at residues 33–42 (ATMTDATLVA). At 43-55 (GPTLTGLALAVEK) the chain is on the chloroplast intermembrane side. A beta stranded transmembrane segment spans residues 56-64 (PGSFIVEYN). Over 65–70 (VPKKDV) the chain is Cytoplasmic. Residues 71 to 80 (RFQFMNTVRI) form a beta stranded membrane-spanning segment. Residues 81 to 93 (AEKPLNLTYIHSR) are Chloroplast intermembrane-facing. Residues 94-103 (ADNRTIVDGS) traverse the membrane as a beta stranded segment. Residues 104-108 (LVIDS) are Cytoplasmic-facing. A beta stranded transmembrane segment spans residues 109–118 (ANKLSANHMV). Residues 119-122 (GTNN) are Chloroplast intermembrane-facing. A beta stranded membrane pass occupies residues 123–132 (CKIKYTYAHG). The Cytoplasmic portion of the chain corresponds to 133-144 (GLATFEPCYDLA). Residues 145 to 156 (KNTWDFAVSRRF) traverse the membrane as a beta stranded segment. Over 157–159 (YSG) the chain is Chloroplast intermembrane. A beta stranded transmembrane segment spans residues 160-168 (DNVRATYQT). Residues 169–170 (SS) lie on the Cytoplasmic side of the membrane. The beta stranded transmembrane segment at 171–179 (KLLGMEWSR) threads the bilayer. At 180–201 (NNKASGFKVCASVNLADELKTP) the chain is on the chloroplast intermembrane side. Residues 202-211 (KLTAETTWNL) traverse the membrane as a beta stranded segment. Over 212 to 213 (EM) the chain is Cytoplasmic.

The protein belongs to the plastid outer envelope porin OEP24 (TC 1.B.28) family. Homooligomers form large rather nonselective pores in plastidial outer membranes.

The protein localises to the plastid. It localises to the etioplast membrane. Its subcellular location is the chloroplast outer membrane. High-conductance voltage-dependent solute channel with a slight selectivity for cations transporting triosephosphates, dicarboxylic acids, ATP, inorganic phosphate (Pi), sugars, and positively or negatively charged amino acids. The protein is Outer envelope pore protein 24B, chloroplastic (OEP24B) of Arabidopsis thaliana (Mouse-ear cress).